Here is a 59-residue protein sequence, read N- to C-terminus: Potassium channel toxin alpha-KTx 4.5 (59 aa).

The first 22 residues, 1–22 (MKAFYGVLIIFILISMLDLSQQ), serve as a signal peptide directing secretion. 3 cysteine pairs are disulfide-bonded: C29/C50, C35/C55, and C39/C57. Residues 48–55 (GKCMNGKC) form an interaction with Ca(2+)-activated K(+) channels region.

Expressed by the venom gland.

The protein localises to the secreted. In terms of biological role, inhibits with low potency Kv1.1/KCNA1, Kv1.2/KCNA2, Kv1.3/KCNA3 and Kv11.1/KCNH2/ERG1 voltage-gated potassium channels. The chain is Potassium channel toxin alpha-KTx 4.5 from Tityus costatus (Brazilian scorpion).